The following is a 76-amino-acid chain: Bomanin Tailed 2 (76 aa).

Positions 1-22 (MKALQVAGTLMLLFCLLAAVNA) are cleaved as a signal peptide. Residues 23–24 (TP) constitute a propeptide, removed by a dipeptidylpeptidase. The cysteines at positions 33 and 36 are disulfide-linked.

Belongs to the bomanin family.

The protein localises to the secreted. Functionally, secreted immune-induced peptide induced by Toll signaling. Has a role in resistance to bacterial and fungal infections. The strength of antimicrobial activity appears to correlate with the overall level of expression. The protein is Bomanin Tailed 2 of Drosophila melanogaster (Fruit fly).